Here is a 335-residue protein sequence, read N- to C-terminus: Vitamin B12 import system permease protein BtuC (335 aa).

A run of 9 helical transmembrane segments spans residues 25–45 (LVVI…IWLW), 67–87 (LAVL…QALF), 95–114 (GLLG…VLLG), 118–140 (LPIW…LLLG), 153–173 (LLVG…AVYF), 200–220 (LVLA…VLNF), 243–263 (VLAI…ISFI), 286–306 (CALA…IALF), and 308–328 (AELP…IWLL).

It belongs to the binding-protein-dependent transport system permease family. FecCD subfamily. The complex is composed of two ATP-binding proteins (BtuD), two transmembrane proteins (BtuC) and a solute-binding protein (BtuF).

The protein resides in the cell inner membrane. In terms of biological role, part of the ABC transporter complex BtuCDF involved in vitamin B12 import. Involved in the translocation of the substrate across the membrane. This chain is Vitamin B12 import system permease protein BtuC, found in Yersinia enterocolitica serotype O:8 / biotype 1B (strain NCTC 13174 / 8081).